Here is a 1243-residue protein sequence, read N- to C-terminus: Serine/threonine-protein kinase/endoribonuclease IRE1 (1243 aa).

The N-terminal stretch at 1-35 (MMRRPPSQGRWSASHQKLLLAFAFILIPWLQLADA) is a signal peptide. At 36 to 585 (QQQPQQPQIR…VKALPQSAAN (550 aa)) the chain is on the lumenal side. Disordered regions lie at residues 70-132 (HAAP…KPNY) and 149-172 (QPVRAPHTSRHHWPSSSAASGLAS). Positions 73 to 85 (PDVHPEAKFDTVN) are enriched in basic and acidic residues. Residues 90–99 (QQSTASPQQH) are compositionally biased toward polar residues. Over residues 163-172 (SSSAASGLAS) the composition is skewed to low complexity. N-linked (GlcNAc...) asparagine glycans are attached at residues Asn226, Asn470, and Asn554. Residues 586–606 (SVIDFVSNPILIIFLIGSLIY) traverse the membrane as a helical segment. The Cytoplasmic portion of the chain corresponds to 607–1243 (NEKKLRRSYH…FREYYEPAGL (637 aa)). The tract at residues 638 to 765 (GDESGDDKDG…QSHENDPALT (128 aa)) is disordered. Over residues 650–660 (PSSPSPRSQPQ) the composition is skewed to low complexity. Positions 674–693 (ERNAGDQDKVKDNRSLHDVS) are enriched in basic and acidic residues. The segment covering 732–749 (KKKKAHRGRRGGVKHRKG) has biased composition (basic residues). One can recognise a Protein kinase domain in the interval 809 to 1105 (VDTDVELGMG…SREVMAHPFF (297 aa)). Residues 815-823 (LGMGSNGTV) and Lys837 each bind ATP. Positions 819, 837, 881, and 883 each coordinate ADP. Catalysis depends on Asp931, which acts as the Proton acceptor. Residues Asn936 and Asp953 each coordinate Mg(2+). The KEN domain maps to 1108 to 1240 (PKKRLAFLCD…TDRFREYYEP (133 aa)).

Belongs to the protein kinase superfamily. Ser/Thr protein kinase family. Requires Mg(2+) as cofactor. In terms of processing, autophosphorylated mainly on serine residues; phosphorylation enables nucleotide binding by the active site.

It localises to the endoplasmic reticulum membrane. It catalyses the reaction L-seryl-[protein] + ATP = O-phospho-L-seryl-[protein] + ADP + H(+). The catalysed reaction is L-threonyl-[protein] + ATP = O-phospho-L-threonyl-[protein] + ADP + H(+). Functionally, senses unfolded proteins in the lumen of the endoplasmic reticulum via its N-terminal domain which leads to enzyme auto-activation. The active endoribonuclease domain splices precursor mRNAs to produce their mature form which then induces transcription of UPR target genes. This is Serine/threonine-protein kinase/endoribonuclease IRE1 from Hypocrea jecorina (strain QM6a) (Trichoderma reesei).